The following is a 297-amino-acid chain: Homoserine kinase (297 aa).

82 to 92 (PLTRGLGSSAS) contacts ATP.

The protein belongs to the GHMP kinase family. Homoserine kinase subfamily.

The protein resides in the cytoplasm. The catalysed reaction is L-homoserine + ATP = O-phospho-L-homoserine + ADP + H(+). It functions in the pathway amino-acid biosynthesis; L-threonine biosynthesis; L-threonine from L-aspartate: step 4/5. Functionally, catalyzes the ATP-dependent phosphorylation of L-homoserine to L-homoserine phosphate. In Bacillus thuringiensis subsp. konkukian (strain 97-27), this protein is Homoserine kinase.